The primary structure comprises 111 residues: Aspartate 1-decarboxylase (111 aa).

The Schiff-base intermediate with substrate; via pyruvic acid role is filled by Ser25. The residue at position 25 (Ser25) is a Pyruvic acid (Ser). Thr57 provides a ligand contact to substrate. Tyr58 acts as the Proton donor in catalysis. 73-75 is a binding site for substrate; sequence GPA.

It belongs to the PanD family. In terms of assembly, heterooctamer of four alpha and four beta subunits. It depends on pyruvate as a cofactor. In terms of processing, is synthesized initially as an inactive proenzyme, which is activated by self-cleavage at a specific serine bond to produce a beta-subunit with a hydroxyl group at its C-terminus and an alpha-subunit with a pyruvoyl group at its N-terminus.

The protein localises to the cytoplasm. It catalyses the reaction L-aspartate + H(+) = beta-alanine + CO2. It participates in cofactor biosynthesis; (R)-pantothenate biosynthesis; beta-alanine from L-aspartate: step 1/1. In terms of biological role, catalyzes the pyruvoyl-dependent decarboxylation of aspartate to produce beta-alanine. This is Aspartate 1-decarboxylase from Francisella tularensis subsp. holarctica (strain LVS).